The following is a 206-amino-acid chain: MVLGKVKKIPVEEPRLTKEQKIERDLLIKKKVSKLANSIRIPPAIYQFRTVLSEHDTKKFVELFMKYRPENKQEKRIRLQSEDPKKGPKPILVKFGLKHVTNLIETKKAKLVLISASVDPIEVVIFLPTLCRKMGVSYAIVENSTLLGKLVNLKTTSCVCLCDVRPEDEGSFKEMLRTADAIFLDNYETHLSTWGGLPQKEADEKQ.

This sequence belongs to the eukaryotic ribosomal protein eL8 family. Component of the large ribosomal subunit.

The protein localises to the cytoplasm. The sequence is that of Large ribosomal subunit protein eL8 (RPL7A) from Encephalitozoon cuniculi (strain GB-M1) (Microsporidian parasite).